The primary structure comprises 299 residues: NAD kinase (299 aa).

D64 serves as the catalytic Proton acceptor. NAD(+) contacts are provided by residues 64 to 65 (DG), 138 to 139 (ND), R149, R166, D168, 179 to 184 (TGYAVS), and Q238.

This sequence belongs to the NAD kinase family. A divalent metal cation serves as cofactor.

Its subcellular location is the cytoplasm. The catalysed reaction is NAD(+) + ATP = ADP + NADP(+) + H(+). Its function is as follows. Involved in the regulation of the intracellular balance of NAD and NADP, and is a key enzyme in the biosynthesis of NADP. Catalyzes specifically the phosphorylation on 2'-hydroxyl of the adenosine moiety of NAD to yield NADP. The sequence is that of NAD kinase from Nitratidesulfovibrio vulgaris (strain ATCC 29579 / DSM 644 / CCUG 34227 / NCIMB 8303 / VKM B-1760 / Hildenborough) (Desulfovibrio vulgaris).